The primary structure comprises 286 residues: Plasma membrane ascorbate-dependent reductase CYBRD1 (286 aa).

Residues 1 to 7 (MAMEGYW) are Cytoplasmic-facing. The helical transmembrane segment at 8 to 32 (RFLALLGSALLVGFLSVIFALVWVL) threads the bilayer. A Cytochrome b561 domain is found at 15–220 (SALLVGFLSV…FGALIFWIVT (206 aa)). Topologically, residues 33–47 (HYREGLGWDGSALEF) are extracellular. The chain crosses the membrane as a helical span at residues 48–69 (NWHPVLMVTGFVFIQGIAIIVY). His50, Arg70, and Lys79 together coordinate heme b. At 70 to 78 (RLPWTWKCS) the chain is on the cytoplasmic side. Positions 79 and 83 each coordinate L-ascorbate. A helical membrane pass occupies residues 79–105 (KLLMKSIHAGLNAVAAILAIISVVAVF). Position 86 (His86) interacts with heme b. Over 106-118 (ENHNVNNIANMYS) the chain is Extracellular. Fe(3+) is bound at residue His108. Heme b-binding positions include 115-118 (NMYS) and His120. The helical transmembrane segment at 119–144 (LHSWVGLIAVICYLLQLLSGFSVFLL) threads the bilayer. Over 145 to 151 (PWAPLSL) the chain is Cytoplasmic. L-ascorbate is bound at residue Arg152. A helical transmembrane segment spans residues 152 to 179 (RAFLMPIHVYSGIVIFGTVIATALMGLT). Residues His159 and Glu180 each contribute to the heme b site. Topologically, residues 180-197 (EKLIFSLRDPAYSTFPPE) are extracellular. The chain crosses the membrane as a helical span at residues 198–222 (GVFVNTLGLLILVFGALIFWIVTRP). At 223–286 (QWKRPKEPNS…LDEAGQRSTM (64 aa)) the chain is on the cytoplasmic side. Lys225 lines the heme b pocket. Residues 229–268 (EPNSTILHPNGGTEQGARGSMPAYSGNNMDKSDSELNSEV) form a disordered region. Residue Ser232 is modified to Phosphoserine. Thr285 carries the phosphothreonine modification.

As to quaternary structure, homodimer. It depends on heme b as a cofactor. As to expression, present in erythrocyte membranes (at protein level). Also expressed in respiratory epithelium.

It localises to the cell membrane. The protein resides in the apical cell membrane. The enzyme catalyses Fe(3+)(out) + L-ascorbate(in) = monodehydro-L-ascorbate radical(in) + Fe(2+)(out) + H(+). It carries out the reaction Cu(2+)(out) + L-ascorbate(in) = Cu(+)(out) + monodehydro-L-ascorbate radical(in) + H(+). The catalysed reaction is monodehydro-L-ascorbate radical(out) + L-ascorbate(in) = monodehydro-L-ascorbate radical(in) + L-ascorbate(out). Activated by chelators like citrate, malate, and oxalate specially at alkaline pH. Plasma membrane reductase that uses cytoplasmic ascorbate as an electron donor to reduce extracellular Fe(3+) into Fe(2+). Probably functions in dietary iron absorption at the brush border of duodenal enterocytes by producing Fe(2+), the divalent form of iron that can be transported into enterocytes. It is also able to reduce extracellular monodehydro-L-ascorbate and may be involved in extracellular ascorbate regeneration by erythrocytes in blood. May also act as a ferrireductase in airway epithelial cells. May also function as a cupric transmembrane reductase. This chain is Plasma membrane ascorbate-dependent reductase CYBRD1, found in Homo sapiens (Human).